A 793-amino-acid polypeptide reads, in one-letter code: DnaJ homolog subfamily C member 10 (793 aa).

A signal peptide spans 1–32; the sequence is MGVWLNRDEFIRDVKRISLCLLVLYVVIVVGT. One can recognise a J domain in the interval 35–100; the sequence is NFYSLLGVSK…DLRKKYDKYG (66 aa). The region spanning 130–232 is the Thioredoxin 1 domain; the sequence is EIITLERREF…ESLVSFAMQH (103 aa). The cysteines at positions 158 and 161 are disulfide-linked. Trxb regions lie at residues 235 to 350 and 348 to 463; these read TTVT…LPDF and PDFE…PQNF. Thioredoxin domains follow at residues 454-553, 557-665, and 671-776; these read HVTT…IEDL, SVVS…SWGL, and ASID…ALIY. C480 and C483 are disulfide-bonded. An N-linked (GlcNAc...) asparagine glycan is attached at N530. Cystine bridges form between C588–C591 and C700–C703. A Prevents secretion from ER motif is present at residues 790 to 793; it reads KDEL.

In terms of assembly, interacts with HSPA5 (via its J domain). Interacts with EDEM1.

It is found in the endoplasmic reticulum lumen. Endoplasmic reticulum disulfide reductase involved both in the correct folding of proteins and degradation of misfolded proteins. Required for efficient folding of proteins in the endoplasmic reticulum by catalyzing the removal of non-native disulfide bonds formed during the folding of proteins, such as LDLR. Also involved in endoplasmic reticulum-associated degradation (ERAD) by reducing incorrect disulfide bonds in misfolded glycoproteins recognized by EDEM1. Interaction with HSPA5 is required its activity, not for the disulfide reductase activity, but to facilitate the release of DNAJC10 from its substrate. Promotes apoptotic signaling pathway in response to endoplasmic reticulum stress. In Rattus norvegicus (Rat), this protein is DnaJ homolog subfamily C member 10 (Dnajc10).